A 70-amino-acid chain; its full sequence is Probable non-specific lipid-transfer protein 2 (70 aa).

4 disulfides stabilise this stretch: Cys4–Cys38, Cys12–Cys26, Cys27–Cys62, and Cys36–Cys69.

In terms of biological role, potential phospholipid transfer protein. The polypeptide is Probable non-specific lipid-transfer protein 2 (Zea mays (Maize)).